The following is a 366-amino-acid chain: Phenylalanine dehydrogenase (366 aa).

Arg-45 is an NAD(+) binding site. L-phenylalanine is bound at residue Lys-69. The active site involves Lys-81. NAD(+)-binding positions include Asp-116, Thr-151, 181–187 (GVGKVGE), 204–205 (DI), 241–242 (AK), and 262–264 (SAN). Asn-264 provides a ligand contact to L-phenylalanine.

It belongs to the Glu/Leu/Phe/Val dehydrogenases family.

The catalysed reaction is L-phenylalanine + NAD(+) + H2O = 3-phenylpyruvate + NH4(+) + NADH + H(+). It functions in the pathway amino-acid biosynthesis; L-phenylalanine biosynthesis; L-phenylalanine from phenylpyruvate (PDH route): step 1/1. Catalyzes the reversible NAD(+)-dependent oxidative deamination of L-phenylalanine to phenylpyruvate. This is Phenylalanine dehydrogenase from Thermoactinomyces intermedius.